The chain runs to 489 residues: Cytochrome P450 monooxygenase orf5 (489 aa).

A helical membrane pass occupies residues 13-35; sequence FVRLLAFHLIGLFVSITVYRLFF. N-linked (GlcNAc...) asparagine glycosylation is found at Asn37, Asn118, Asn171, and Asn345. Cys428 serves as a coordination point for heme.

The protein belongs to the cytochrome P450 family. The cofactor is heme.

It is found in the membrane. The protein operates within mycotoxin biosynthesis. In terms of biological role, cytochrome P450 monooxygenase; part of the gene cluster that mediates the biosynthesis of brefeldin A (BFA), a protein transport inhibitor that shows antiviral, antifungal, and antitumor properties. The proposed biosynthesis of BFA involves formation of an acyclic polyketide chain that is differentially tailored throughout the backbone. The highly reducing polyketide synthase Bref-PKS is proposed to synthesize the precisely reduced octaketide precursor, which could then be directly offloaded by the thiohydrolase enzyme Bref-TH followed by a cytochrome P450 monooxygenase-mediated formation of the cyclopentane ring and macrocyclization to afford 7-deoxy BFA. Alternatively, the first ring annulation can also occur on the ACP-tethered intermediate before the thiohydrolase release and lactonization. The C7-hydroxylation by another cytochrome P450 monooxygenase is believed to be the final step in the process to obtain the final structure of BFA. In addition to the HRPKS Bref-PKS and the thiohydrolase Bref-TH, the brefeldin A biosynthesis cluster contains 4 cytochrome p450 monooxygenases (called orf3 to orf6), as well a the probable cluster-specific transcription regulator orf8. This Eupenicillium brefeldianum (Penicillium brefeldianum) protein is Cytochrome P450 monooxygenase orf5.